Reading from the N-terminus, the 589-residue chain is Zinc finger and BTB domain-containing protein 46 (589 aa).

Positions 31-99 constitute a BTB domain; sequence CDVCVVVEGK…MYSAHLALTS (69 aa). The tract at residues 173 to 330 is disordered; it reads RRTSPANSSG…ASSSDSRGER (158 aa). Positions 197 to 207 are enriched in basic and acidic residues; that stretch reads GKEDQEPKADG. Lys229 is covalently cross-linked (Glycyl lysine isopeptide (Lys-Gly) (interchain with G-Cter in SUMO2)). Position 234 is a phosphoserine (Ser234). Residues 305 to 325 show a composition bias toward polar residues; it reads WPFSSRDSNADLSVTEASSSD. 2 consecutive C2H2-type zinc fingers follow at residues 418 to 436 and 446 to 468; these read FKCP…LKRH and YPCE…TLVH. Positions 512–589 are disordered; the sequence is PLDHGGGGGE…GPDKDFAWLS (78 aa). Residues 546–570 are compositionally biased toward acidic residues; it reads EELGEDDEGLAPEDALLADDKDEED.

Sumoylated. Desumoylation by DESI1 reverses transcriptional repression activity.

It localises to the nucleus. Its function is as follows. Functions as a transcriptional repressor for PRDM1. The sequence is that of Zinc finger and BTB domain-containing protein 46 (ZBTB46) from Homo sapiens (Human).